The sequence spans 112 residues: uncharacterized protein (112 aa).

This is an uncharacterized protein from Sulfolobus islandicus filamentous virus (isolate Iceland/Hveragerdi) (SIFV).